The following is a 366-amino-acid chain: Pectinesterase A (366 aa).

Positions 1 to 24 (MLKTISGTLALSLIIAASVHQAQA) are cleaved as a signal peptide. Positions 109 and 153 each coordinate substrate. Aspartate 178 serves as the catalytic Proton donor. An intrachain disulfide couples cysteine 192 to cysteine 212. Residue aspartate 199 is the Nucleophile of the active site. 6 residues coordinate substrate: arginine 219, asparagine 226, tyrosine 230, arginine 267, tryptophan 269, and threonine 272.

This sequence belongs to the pectinesterase family. Monomer.

The protein resides in the secreted. It carries out the reaction [(1-&gt;4)-alpha-D-galacturonosyl methyl ester](n) + n H2O = [(1-&gt;4)-alpha-D-galacturonosyl](n) + n methanol + n H(+). It functions in the pathway glycan metabolism; pectin degradation; 2-dehydro-3-deoxy-D-gluconate from pectin: step 1/5. Involved in maceration and soft-rotting of plant tissue. In Dickeya chrysanthemi (Pectobacterium chrysanthemi), this protein is Pectinesterase A (pemA).